A 237-amino-acid chain; its full sequence is Mitochondrial inner membrane protease atp23 (237 aa).

Low complexity predominate over residues Met-1 to Gly-19. The disordered stretch occupies residues Met-1–Gly-23. His-136 contacts a divalent metal cation. Glu-137 is an active-site residue. Residue His-140 coordinates a divalent metal cation.

This sequence belongs to the peptidase M76 family.

It localises to the mitochondrion inner membrane. Has a dual role in the assembly of mitochondrial ATPase. Acts as a protease that removes N-terminal residues of mitochondrial ATPase CF(0) subunit 6 at the intermembrane space side. Also involved in the correct assembly of the membrane-embedded ATPase CF(0) particle, probably mediating association of subunit 6 with the subunit 9 ring. The polypeptide is Mitochondrial inner membrane protease atp23 (atp23) (Neosartorya fischeri (strain ATCC 1020 / DSM 3700 / CBS 544.65 / FGSC A1164 / JCM 1740 / NRRL 181 / WB 181) (Aspergillus fischerianus)).